Consider the following 106-residue polypeptide: Large ribosomal subunit protein P1 (106 aa).

The segment at alanine 69 to glycine 106 is disordered. Residues lysine 83–isoleucine 98 are compositionally biased toward acidic residues.

It belongs to the eukaryotic ribosomal protein P1/P2 family. As to quaternary structure, part of the 50S ribosomal subunit. Homodimer, it forms part of the ribosomal stalk which helps the ribosome interact with GTP-bound translation factors. Forms a heptameric uL10/P0(P1)2(P1)2(P1)2 complex, where uL10/P0 forms an elongated spine to which the P1 dimers bind in a sequential fashion.

Its function is as follows. Forms part of the ribosomal stalk, playing a central role in the interaction of the ribosome with GTP-bound translation factors. In Archaeoglobus fulgidus (strain ATCC 49558 / DSM 4304 / JCM 9628 / NBRC 100126 / VC-16), this protein is Large ribosomal subunit protein P1.